The sequence spans 149 residues: Large ribosomal subunit protein uL13 (149 aa).

This sequence belongs to the universal ribosomal protein uL13 family. In terms of assembly, part of the 50S ribosomal subunit.

Functionally, this protein is one of the early assembly proteins of the 50S ribosomal subunit, although it is not seen to bind rRNA by itself. It is important during the early stages of 50S assembly. The polypeptide is Large ribosomal subunit protein uL13 (Chlorobium chlorochromatii (strain CaD3)).